We begin with the raw amino-acid sequence, 572 residues long: Cytochrome P450 monooxygenase xilC (572 aa).

Cys-515 serves as a coordination point for heme.

The protein belongs to the cytochrome P450 family. The cofactor is heme.

It functions in the pathway secondary metabolite biosynthesis. In terms of biological role, cytochrome P450 monooxygenase; part of the gene cluster that mediates the biosynthesis of the 6-methyl-2-pyrone derivative xylariolide D. XilC hydroxylates the 5-alkyl-6-methyl-2-pyrone backbone called prexylariolide D, produced by the highly reducing polyketide synthase xilA, on its side chain to form xylariolide D. This chain is Cytochrome P450 monooxygenase xilC, found in Penicillium crustosum (Blue mold fungus).